Reading from the N-terminus, the 136-residue chain is MTERTLVLIKPDGVQRQLVGEIIGRIERKGLTLVALELRHVSQDLAAQHYAEHEGKPFFASLLEFITSGPVVAAIVEGPRAIAAFRQLAGGTDPVEKAIPGTIRGDFGLETQFNLVHGSDSVESAKREIGLWFPDA.

ATP contacts are provided by Lys10, Phe58, Arg86, Thr92, Arg104, and Asn114. Residue His117 is the Pros-phosphohistidine intermediate of the active site.

It belongs to the NDK family. In terms of assembly, homotetramer. The cofactor is Mg(2+).

The protein localises to the cytoplasm. The catalysed reaction is a 2'-deoxyribonucleoside 5'-diphosphate + ATP = a 2'-deoxyribonucleoside 5'-triphosphate + ADP. The enzyme catalyses a ribonucleoside 5'-diphosphate + ATP = a ribonucleoside 5'-triphosphate + ADP. In terms of biological role, major role in the synthesis of nucleoside triphosphates other than ATP. The ATP gamma phosphate is transferred to the NDP beta phosphate via a ping-pong mechanism, using a phosphorylated active-site intermediate. This is Nucleoside diphosphate kinase from Mycolicibacterium paratuberculosis (strain ATCC BAA-968 / K-10) (Mycobacterium paratuberculosis).